Reading from the N-terminus, the 461-residue chain is MCHIILLGMNHKTAPVEMRERLAVACRQEVNPLRLLPRLENVDELLFLSTCNRVEFLFTCRDRDGGLREVTALLRTYLGLDSTEGVENHVYAFRGMEAVRHVFRVASSLDSMVVGEPQILGQLKSAYREATEWRTVKVILNRLLHKTFSVAKRVRSETCIGSNAVSISYAAVELAKKIFGSLQDKRVLLIGAGEMAELAAEHLLAQGVRHMVVANRTLERAVDLAKRFRAETTPFDHILNALKNTDIVLSSTGAPEPILKYNDVRARMRERRNKPLFFIDIAVPRDIDPKINEIDNVYLYDIDDLQGVIDLNREERKREAERAEHIIAGETLKFQEWMATLNVVPTIVALREKAETIRRSELQRTLSHLPHMSEKDRLAVEALTEAIVKKLLHDPIVFLKKKADRSTKDMYVDYTQQLFNLADGDDGEEAPAVTVQMASAGNDGTLLKTFEPDKESPWRKS.

Substrate-binding positions include Thr50–Arg53, Ser111, Glu116–Gln118, and Gln122. Cys51 serves as the catalytic Nucleophile. Position 191–196 (Gly191–Ala196) interacts with NADP(+).

This sequence belongs to the glutamyl-tRNA reductase family. Homodimer.

The enzyme catalyses (S)-4-amino-5-oxopentanoate + tRNA(Glu) + NADP(+) = L-glutamyl-tRNA(Glu) + NADPH + H(+). The protein operates within porphyrin-containing compound metabolism; protoporphyrin-IX biosynthesis; 5-aminolevulinate from L-glutamyl-tRNA(Glu): step 1/2. Functionally, catalyzes the NADPH-dependent reduction of glutamyl-tRNA(Glu) to glutamate 1-semialdehyde (GSA). The polypeptide is Glutamyl-tRNA reductase (Syntrophobacter fumaroxidans (strain DSM 10017 / MPOB)).